The sequence spans 504 residues: DnaJ homolog subfamily C member 3 (504 aa).

Residues 1–31 (MVAPGSVRSRLGAVFPFLLVLVDLQYEGAEC) form the signal peptide. TPR repeat units lie at residues 37–70 (VEKH…DPDN), 72–104 (IAYY…KMDF), 105–138 (TAAR…NPSE), 154–187 (MQRL…CVWD), 188–221 (AELR…KNDN), 222–255 (TEAF…DQDH), 268–301 (LNKL…EPSV), 306–339 (VRSK…EPDN), and 340–373 (VNAL…NEND). Cysteines 248 and 258 form a disulfide. Ser274 carries the post-translational modification Phosphoserine. Cys313 and Cys329 are disulfide-bonded. The interval 375 to 393 (QIREGLEKAQRLLKQSQKR) is flexible linker. The region spanning 394 to 462 (DYYKILGVKR…EMRRKFDDGE (69 aa)) is the J domain. A disordered region spans residues 451–481 (DPEMRRKFDDGEDPLDAETQQGGGSNPFHRS). A Phosphoserine modification is found at Ser475.

As to quaternary structure, interacts with EIF2AK2 and EIF2AK3. Forms a trimeric complex with DNAJB1 and HSPA8. Interacts with THAP12.

It localises to the endoplasmic reticulum. Involved in the unfolded protein response (UPR) during ER stress. Co-chaperone of HSPA8/HSC70, it stimulates its ATPase activity. May inhibit both the autophosphorylation of EIF2AK2/PKR and the ability of EIF2AK2 to catalyze phosphorylation of the EIF2A. May inhibit EIF2AK3/PERK activity. In Rattus norvegicus (Rat), this protein is DnaJ homolog subfamily C member 3 (Dnajc3).